Here is a 384-residue protein sequence, read N- to C-terminus: DNA polymerase IV (384 aa).

One can recognise a UmuC domain in the interval isoleucine 5–glycine 182. The Mg(2+) site is built by aspartate 9, methionine 10, and aspartate 103. Glutamate 104 is a catalytic residue.

This sequence belongs to the DNA polymerase type-Y family. In terms of assembly, monomer. Requires Mg(2+) as cofactor.

It localises to the cytoplasm. It carries out the reaction DNA(n) + a 2'-deoxyribonucleoside 5'-triphosphate = DNA(n+1) + diphosphate. Poorly processive, error-prone DNA polymerase involved in translesion repair and untargeted mutagenesis. Copies undamaged DNA at stalled replication forks, which arise in vivo from mismatched or misaligned primer ends. These misaligned primers can be extended by PolIV. Exhibits no 3'-5' exonuclease (proofreading) activity. Involved in translesional synthesis. Primer extension fidelity in vitro is temperature-dependent. Inserts a correct base opposite templating bases at 70 degrees Celsius, but at 37 degrees Celsius in addition to correct base pairing, base transitions, transversions and frameshifts can occur. Preferably forms erroneous base pairs C:T. Bypasses 8-oxo-dG oxidative damage by incorporating dATP or dCTP opposite of the damaged DNA template site at both temperatures in vitro. This Caldanaerobacter subterraneus subsp. tengcongensis (strain DSM 15242 / JCM 11007 / NBRC 100824 / MB4) (Thermoanaerobacter tengcongensis) protein is DNA polymerase IV.